The sequence spans 345 residues: Holliday junction branch migration complex subunit RuvB (345 aa).

Positions 4-185 (LDNRFVTPLS…FGVLCPMEFY (182 aa)) are large ATPase domain (RuvB-L). ATP contacts are provided by residues leucine 24, arginine 25, glycine 66, lysine 69, threonine 70, threonine 71, 132–134 (EDY), arginine 175, tyrosine 185, and arginine 222. Threonine 70 contributes to the Mg(2+) binding site. The small ATPAse domain (RuvB-S) stretch occupies residues 186–256 (NEEELKDIIV…MTNKALNLLE (71 aa)). The interval 259 to 345 (KEGFDSIDTK…ENINQYKFKI (87 aa)) is head domain (RuvB-H). Residues arginine 314 and arginine 319 each contribute to the DNA site.

It belongs to the RuvB family. In terms of assembly, homohexamer. Forms an RuvA(8)-RuvB(12)-Holliday junction (HJ) complex. HJ DNA is sandwiched between 2 RuvA tetramers; dsDNA enters through RuvA and exits via RuvB. An RuvB hexamer assembles on each DNA strand where it exits the tetramer. Each RuvB hexamer is contacted by two RuvA subunits (via domain III) on 2 adjacent RuvB subunits; this complex drives branch migration. In the full resolvosome a probable DNA-RuvA(4)-RuvB(12)-RuvC(2) complex forms which resolves the HJ.

The protein resides in the cytoplasm. The catalysed reaction is ATP + H2O = ADP + phosphate + H(+). The RuvA-RuvB-RuvC complex processes Holliday junction (HJ) DNA during genetic recombination and DNA repair, while the RuvA-RuvB complex plays an important role in the rescue of blocked DNA replication forks via replication fork reversal (RFR). RuvA specifically binds to HJ cruciform DNA, conferring on it an open structure. The RuvB hexamer acts as an ATP-dependent pump, pulling dsDNA into and through the RuvAB complex. RuvB forms 2 homohexamers on either side of HJ DNA bound by 1 or 2 RuvA tetramers; 4 subunits per hexamer contact DNA at a time. Coordinated motions by a converter formed by DNA-disengaged RuvB subunits stimulates ATP hydrolysis and nucleotide exchange. Immobilization of the converter enables RuvB to convert the ATP-contained energy into a lever motion, pulling 2 nucleotides of DNA out of the RuvA tetramer per ATP hydrolyzed, thus driving DNA branch migration. The RuvB motors rotate together with the DNA substrate, which together with the progressing nucleotide cycle form the mechanistic basis for DNA recombination by continuous HJ branch migration. Branch migration allows RuvC to scan DNA until it finds its consensus sequence, where it cleaves and resolves cruciform DNA. This Clostridium tetani (strain Massachusetts / E88) protein is Holliday junction branch migration complex subunit RuvB.